The primary structure comprises 200 residues: A-type ATP synthase subunit E (200 aa).

The protein belongs to the V-ATPase E subunit family. In terms of assembly, has multiple subunits with at least A(3), B(3), C, D, E, F, H, I and proteolipid K(x).

It localises to the cell membrane. Functionally, component of the A-type ATP synthase that produces ATP from ADP in the presence of a proton gradient across the membrane. The protein is A-type ATP synthase subunit E of Methanopyrus kandleri (strain AV19 / DSM 6324 / JCM 9639 / NBRC 100938).